Reading from the N-terminus, the 816-residue chain is Metabotropic glutamate receptor-like protein E (816 aa).

A signal peptide spans 1–27 (MKIKIGNILKNVVILVIFSLFISKINS). Residues 28 to 436 (EVVKPNPAKP…QVVVFDRTLN (409 aa)) lie on the Extracellular side of the membrane. Residues asparagine 68, asparagine 311, and asparagine 388 are each glycosylated (N-linked (GlcNAc...) asparagine). The chain crosses the membrane as a helical span at residues 437–457 (IVLGVITGVCVLIVIGIGSVI). Residues 458–469 (ALQWRKFRYSSP) are Cytoplasmic-facing. Residues 470 to 490 (LFCMFIIIGALMGLASVFTLL) traverse the membrane as a helical segment. At 491–496 (PTPTTP) the chain is on the extracellular side. Residues 497 to 517 (LCSGFPWLLGLGYVIVFGTLF) traverse the membrane as a helical segment. At 518-541 (TKTWRTWRLFSNARKFKIIRITNK) the chain is on the cytoplasmic side. A helical transmembrane segment spans residues 542–562 (FIITLVGGFVLLESIFMIIWT). Residues 563-590 (AVDRPIPLAEPIFKAGEAQLQCTSDSEA) are Extracellular-facing. Residues 591–611 (WWYVFVFYKVFYILFGVFLAF) form a helical membrane-spanning segment. Residues 612-625 (KTRNVVDSLNESKP) are Cytoplasmic-facing. The helical transmembrane segment at 626-646 (ITLALYNLTFVMVVAIALGFI) threads the bilayer. The Extracellular portion of the chain corresponds to 647 to 653 (LRDNPIA). The chain crosses the membrane as a helical span at residues 654–674 (IIVIQTIAILLGFTVTVSVLF). Residues 675 to 816 (LPKVWMILSG…KKKKKKNNNK (142 aa)) are Cytoplasmic-facing. The disordered stretch occupies residues 697 to 718 (DSMGRSNGNTTEAESTRGYTNK).

This sequence belongs to the G-protein coupled receptor 3 family.

It is found in the membrane. Functionally, may be involved in early development in cAMP sensing and subsequent chemotactic response. Probable receptor of GABA and glutamate, leading respectively to the induction or inhibition of SDF-2 formation. In Dictyostelium discoideum (Social amoeba), this protein is Metabotropic glutamate receptor-like protein E (grlE).